Reading from the N-terminus, the 36-residue chain is Glycine-rich protein GWK (36 aa).

The tract at residues 1–36 is disordered; sequence YKRGGGGWGGGGGWKGGGGGGGGWKGGGGGGKGGGG.

In terms of biological role, possesses antifungal activity against a number of phytopathogenic fungi, including H.sativum and F.culmorum. This chain is Glycine-rich protein GWK, found in Cucumis melo (Muskmelon).